The sequence spans 259 residues: 3-methyl-2-oxobutanoate hydroxymethyltransferase (259 aa).

Mg(2+) is bound by residues aspartate 44 and aspartate 83. Residues 44–45 (DS), aspartate 83, and lysine 112 contribute to the 3-methyl-2-oxobutanoate site. Mg(2+) is bound at residue glutamate 114. The active-site Proton acceptor is the glutamate 177.

Belongs to the PanB family. In terms of assembly, homodecamer; pentamer of dimers. Mg(2+) serves as cofactor.

Its subcellular location is the cytoplasm. It catalyses the reaction 3-methyl-2-oxobutanoate + (6R)-5,10-methylene-5,6,7,8-tetrahydrofolate + H2O = 2-dehydropantoate + (6S)-5,6,7,8-tetrahydrofolate. It participates in cofactor biosynthesis; (R)-pantothenate biosynthesis; (R)-pantoate from 3-methyl-2-oxobutanoate: step 1/2. Functionally, catalyzes the reversible reaction in which hydroxymethyl group from 5,10-methylenetetrahydrofolate is transferred onto alpha-ketoisovalerate to form ketopantoate. The sequence is that of 3-methyl-2-oxobutanoate hydroxymethyltransferase from Nitratiruptor sp. (strain SB155-2).